The sequence spans 37 residues: Large ribosomal subunit protein bL36 (37 aa).

This sequence belongs to the bacterial ribosomal protein bL36 family.

The polypeptide is Large ribosomal subunit protein bL36 (Marinomonas sp. (strain MWYL1)).